The chain runs to 432 residues: N-acylneuraminate cytidylyltransferase (432 aa).

Positions 39, 49, 98, 107, 109, and 130 each coordinate substrate. Arginine 188 is a catalytic residue.

This sequence belongs to the CMP-NeuNAc synthase family. In terms of assembly, homotetramer; the active enzyme is formed by a dimer of dimers. Expressed in testis, ovary and liver.

It localises to the nucleus. The enzyme catalyses an N-acylneuraminate + CTP = a CMP-N-acyl-beta-neuraminate + diphosphate. It functions in the pathway amino-sugar metabolism; N-acetylneuraminate metabolism. In terms of biological role, catalyzes the activation of N-acetylneuraminic acid (NeuNAc) to cytidine 5'-monophosphate N-acetylneuraminic acid (CMP-NeuNAc), a substrate required for the addition of sialic acid. This is N-acylneuraminate cytidylyltransferase (cmas) from Oncorhynchus mykiss (Rainbow trout).